The following is a 315-amino-acid chain: DNA-directed RNA polymerase subunit alpha (315 aa).

An alpha N-terminal domain (alpha-NTD) region spans residues 1 to 227 (MTQFQIECVE…NLFNPFKKIN (227 aa)). The interval 239-315 (EDKISQIPIE…PKRKTNKKEN (77 aa)) is alpha C-terminal domain (alpha-CTD).

The protein belongs to the RNA polymerase alpha chain family. As to quaternary structure, in plastids the minimal PEP RNA polymerase catalytic core is composed of four subunits: alpha, beta, beta', and beta''. When a (nuclear-encoded) sigma factor is associated with the core the holoenzyme is formed, which can initiate transcription.

It localises to the plastid. The protein resides in the cyanelle. It catalyses the reaction RNA(n) + a ribonucleoside 5'-triphosphate = RNA(n+1) + diphosphate. Its function is as follows. DNA-dependent RNA polymerase catalyzes the transcription of DNA into RNA using the four ribonucleoside triphosphates as substrates. The polypeptide is DNA-directed RNA polymerase subunit alpha (Cyanophora paradoxa).